The sequence spans 226 residues: 1-hydroxy-2-glutathionyl-2-methyl-3-butene dehydrogenase (226 aa).

It belongs to the short-chain dehydrogenases/reductases (SDR) family.

The catalysed reaction is 2-glutathionyl-2-methylbut-3-en-1-ol + 2 NAD(+) + H2O = 2-glutathionyl-2-methylbut-3-enoate + 2 NADH + 3 H(+). It carries out the reaction 2-glutathionyl-2-methylbut-3-en-1-ol + NAD(+) = 2-glutathionyl-2-methylbut-3-enal + NADH + H(+). It catalyses the reaction 2-glutathionyl-2-methylbut-3-enal + NAD(+) + H2O = 2-glutathionyl-2-methylbut-3-enoate + NADH + 2 H(+). In terms of biological role, involved in isoprene degradation. Catalyzes the two-step NAD(+)-dependent oxidation of 2-glutathionyl-2-methylbut-3-en-1-ol (HGMB) to 2-glutathionyl-2-methylbut-3-enoate (GMBA). The polypeptide is 1-hydroxy-2-glutathionyl-2-methyl-3-butene dehydrogenase (Rhodococcus sp. (strain AD45)).